The primary structure comprises 493 residues: Alpha-amylase-related protein (493 aa).

Positions 1–19 (MFKFATAVILCLAASSTLA) are cleaved as a signal peptide. Gln20 is subject to Pyrrolidone carboxylic acid. An intrachain disulfide couples Cys47 to Cys103. Residues Asn117, Gln168, and Asp177 each coordinate Ca(2+). A disulfide bond links Cys156 and Cys170. Arg205 lines the chloride pocket. The active-site Nucleophile is the Asp207. His211 is a binding site for Ca(2+). The active-site Proton donor is the Glu244. Chloride contacts are provided by Asn307 and Arg342. Disulfide bonds link Cys375–Cys381, Cys417–Cys440, and Cys447–Cys459.

This sequence belongs to the glycosyl hydrolase 13 family. As to quaternary structure, monomer. It depends on Ca(2+) as a cofactor. Chloride serves as cofactor.

Its subcellular location is the secreted. The catalysed reaction is Endohydrolysis of (1-&gt;4)-alpha-D-glucosidic linkages in polysaccharides containing three or more (1-&gt;4)-alpha-linked D-glucose units.. This Drosophila ananassae (Fruit fly) protein is Alpha-amylase-related protein (Amyrel).